The chain runs to 469 residues: Glutamate--tRNA ligase (469 aa).

Residues 11-21 (PSPTGFIHLGN) carry the 'HIGH' region motif. Residues 114 to 131 (QREAGEKPRYDGTWRPEP) show a composition bias toward basic and acidic residues. Positions 114–139 (QREAGEKPRYDGTWRPEPGKVLPEPP) are disordered. A 'KMSKS' region motif is present at residues 243-247 (KMSKR). Lys246 serves as a coordination point for ATP.

This sequence belongs to the class-I aminoacyl-tRNA synthetase family. Glutamate--tRNA ligase type 1 subfamily. As to quaternary structure, monomer.

It localises to the cytoplasm. The catalysed reaction is tRNA(Glu) + L-glutamate + ATP = L-glutamyl-tRNA(Glu) + AMP + diphosphate. Functionally, catalyzes the attachment of glutamate to tRNA(Glu) in a two-step reaction: glutamate is first activated by ATP to form Glu-AMP and then transferred to the acceptor end of tRNA(Glu). This Paraburkholderia phytofirmans (strain DSM 17436 / LMG 22146 / PsJN) (Burkholderia phytofirmans) protein is Glutamate--tRNA ligase.